The following is a 317-amino-acid chain: (R)-citramalyl-CoA lyase (317 aa).

The 278-residue stretch at 4 to 281 (VTIVDVAPRD…PTGIDLSALI (278 aa)) folds into the Pyruvate carboxyltransferase domain. Residue arginine 12 participates in substrate binding. A divalent metal cation-binding residues include aspartate 13, histidine 214, and histidine 216. Residue cysteine 247 is part of the active site. An a divalent metal cation-binding site is contributed by asparagine 256.

This sequence belongs to the HMG-CoA lyase family. Homodimer. It depends on Mn(2+) as a cofactor. Co(2+) serves as cofactor. The cofactor is Ni(2+). Mg(2+) is required as a cofactor.

It carries out the reaction (3R)-citramalyl-CoA = pyruvate + acetyl-CoA. Activated by dithioerythritol (DTE) (in vitro). Its function is as follows. Involved in the glyoxylate assimilation cycle used to regenerate acetyl-CoA and produce pyruvate as universal precursor for biosynthesis. Catalyzes the cleavage of (R)-citramalyl-CoA to yield acetyl-CoA and pyruvate. In Chloroflexus aurantiacus (strain ATCC 29366 / DSM 635 / J-10-fl), this protein is (R)-citramalyl-CoA lyase (ccl).